The chain runs to 304 residues: MITAKMVKELREITGAGMMDCKKALTETNGDTEKAVEVLREKGLAAAAKKSGRIAAEGLVETYIAEDKKNASIVEVNCETDFVAANEEFKGLVANIAKQAANTKAEDVDSFIEEKYIGSEEGTIKDAVTALVAKLGENMSVRRFKQLSVENGIIESYIHGDGKIGVLVELECEKESEVLSEVAKDVAMQVAAVNPPFLDRTFVDEETLDKEREIYRVQALNEGKPEKIVDKMVEGRIQKYYKENCLVEQVWVRNSDYTIDKYVKEKSKEVGADIKVANFVRFEKGEGIEKKEEDFAEEVKKQMQ.

The involved in Mg(2+) ion dislocation from EF-Tu stretch occupies residues 80 to 83 (TDFV).

The protein belongs to the EF-Ts family.

Its subcellular location is the cytoplasm. Functionally, associates with the EF-Tu.GDP complex and induces the exchange of GDP to GTP. It remains bound to the aminoacyl-tRNA.EF-Tu.GTP complex up to the GTP hydrolysis stage on the ribosome. This Clostridium tetani (strain Massachusetts / E88) protein is Elongation factor Ts.